The chain runs to 332 residues: Ornithine carbamoyltransferase 1, catabolic (332 aa).

Carbamoyl phosphate contacts are provided by residues 56 to 59 (STRT), Q83, R107, and 134 to 137 (HPTQ). L-ornithine contacts are provided by residues N167, D231, and 235–236 (SM). Carbamoyl phosphate-binding positions include 273 to 274 (CL) and R318.

This sequence belongs to the aspartate/ornithine carbamoyltransferase superfamily. OTCase family.

Its subcellular location is the cytoplasm. The enzyme catalyses carbamoyl phosphate + L-ornithine = L-citrulline + phosphate + H(+). Its pathway is amino-acid degradation; L-arginine degradation via ADI pathway; carbamoyl phosphate from L-arginine: step 2/2. In terms of biological role, reversibly catalyzes the transfer of the carbamoyl group from carbamoyl phosphate (CP) to the N(epsilon) atom of ornithine (ORN) to produce L-citrulline. The chain is Ornithine carbamoyltransferase 1, catabolic (arcB1) from Staphylococcus epidermidis (strain ATCC 12228 / FDA PCI 1200).